A 493-amino-acid polypeptide reads, in one-letter code: Lysine--tRNA ligase (493 aa).

Positions 406 and 413 each coordinate Mg(2+).

The protein belongs to the class-II aminoacyl-tRNA synthetase family. In terms of assembly, homodimer. Mg(2+) is required as a cofactor.

The protein localises to the cytoplasm. It catalyses the reaction tRNA(Lys) + L-lysine + ATP = L-lysyl-tRNA(Lys) + AMP + diphosphate. The chain is Lysine--tRNA ligase from Leuconostoc citreum (strain KM20).